Here is a 178-residue protein sequence, read N- to C-terminus: Sec-independent protein translocase protein TatB (178 aa).

A helical transmembrane segment spans residues 2-22 (LPEIGAAELLIIAAVALIVVG). Residues 104-178 (HSPTGYENTV…KARKTAGSAE (75 aa)) are disordered. Positions 114–131 (EPPPPEPEPQPAAEPAPK) are enriched in pro residues. The segment covering 141-154 (PKAAAAPKAAAKPK) has biased composition (low complexity).

It belongs to the TatB family. The Tat system comprises two distinct complexes: a TatABC complex, containing multiple copies of TatA, TatB and TatC subunits, and a separate TatA complex, containing only TatA subunits. Substrates initially bind to the TatABC complex, which probably triggers association of the separate TatA complex to form the active translocon.

Its subcellular location is the cell inner membrane. In terms of biological role, part of the twin-arginine translocation (Tat) system that transports large folded proteins containing a characteristic twin-arginine motif in their signal peptide across membranes. Together with TatC, TatB is part of a receptor directly interacting with Tat signal peptides. TatB may form an oligomeric binding site that transiently accommodates folded Tat precursor proteins before their translocation. This Phenylobacterium zucineum (strain HLK1) protein is Sec-independent protein translocase protein TatB.